The chain runs to 248 residues: Pyridoxine 5'-phosphate synthase (248 aa).

Asn11 serves as a coordination point for 3-amino-2-oxopropyl phosphate. A 1-deoxy-D-xylulose 5-phosphate-binding site is contributed by 13 to 14; the sequence is DH. Position 22 (Arg22) interacts with 3-amino-2-oxopropyl phosphate. The Proton acceptor role is filled by His47. 1-deoxy-D-xylulose 5-phosphate is bound by residues Arg49 and His54. The active-site Proton acceptor is the Glu74. Position 104 (Thr104) interacts with 1-deoxy-D-xylulose 5-phosphate. Catalysis depends on His198, which acts as the Proton donor. Residues Gly199 and 220-221 contribute to the 3-amino-2-oxopropyl phosphate site; that span reads GH.

It belongs to the PNP synthase family. In terms of assembly, homooctamer; tetramer of dimers.

It localises to the cytoplasm. The enzyme catalyses 3-amino-2-oxopropyl phosphate + 1-deoxy-D-xylulose 5-phosphate = pyridoxine 5'-phosphate + phosphate + 2 H2O + H(+). The protein operates within cofactor biosynthesis; pyridoxine 5'-phosphate biosynthesis; pyridoxine 5'-phosphate from D-erythrose 4-phosphate: step 5/5. Functionally, catalyzes the complicated ring closure reaction between the two acyclic compounds 1-deoxy-D-xylulose-5-phosphate (DXP) and 3-amino-2-oxopropyl phosphate (1-amino-acetone-3-phosphate or AAP) to form pyridoxine 5'-phosphate (PNP) and inorganic phosphate. This chain is Pyridoxine 5'-phosphate synthase, found in Ruegeria pomeroyi (strain ATCC 700808 / DSM 15171 / DSS-3) (Silicibacter pomeroyi).